A 110-amino-acid chain; its full sequence is Nucleoid-associated protein KPK_4227 (110 aa).

The segment at 1–22 is disordered; that stretch reads MFGGKGGLGNLMKQAQQMQDKM.

The protein belongs to the YbaB/EbfC family. Homodimer.

The protein resides in the cytoplasm. The protein localises to the nucleoid. Functionally, binds to DNA and alters its conformation. May be involved in regulation of gene expression, nucleoid organization and DNA protection. In Klebsiella pneumoniae (strain 342), this protein is Nucleoid-associated protein KPK_4227.